Reading from the N-terminus, the 99-residue chain is Aspartyl/glutamyl-tRNA(Asn/Gln) amidotransferase subunit C (99 aa).

It belongs to the GatC family. In terms of assembly, heterotrimer of A, B and C subunits.

The enzyme catalyses L-glutamyl-tRNA(Gln) + L-glutamine + ATP + H2O = L-glutaminyl-tRNA(Gln) + L-glutamate + ADP + phosphate + H(+). It carries out the reaction L-aspartyl-tRNA(Asn) + L-glutamine + ATP + H2O = L-asparaginyl-tRNA(Asn) + L-glutamate + ADP + phosphate + 2 H(+). Functionally, allows the formation of correctly charged Asn-tRNA(Asn) or Gln-tRNA(Gln) through the transamidation of misacylated Asp-tRNA(Asn) or Glu-tRNA(Gln) in organisms which lack either or both of asparaginyl-tRNA or glutaminyl-tRNA synthetases. The reaction takes place in the presence of glutamine and ATP through an activated phospho-Asp-tRNA(Asn) or phospho-Glu-tRNA(Gln). This is Aspartyl/glutamyl-tRNA(Asn/Gln) amidotransferase subunit C from Orientia tsutsugamushi (strain Ikeda) (Rickettsia tsutsugamushi).